Consider the following 248-residue polypeptide: MALLEICCYSMECALTAQQNGADRVELCAAPKEGGLTPSLGVLKSVRQRVTIPVHPIIRPRGGDFCYSDGEFAAILEDVRTVRELGFPGLVTGVLDVDGNVDMPRMEKIMAAAGPLAVTFHRAFDMCANPLNTLNNLAEFGVARVLTSGQKSDALQGLSKIMELIAHGDAPIIMAGAGVRAENLHHFLDAGVLEVHSSAGAWQASPMRYRNQGLSMSSDAHADEYSRYVVDGAAVAEMKGIIERHQAK.

The protein belongs to the CutC family. Homodimer.

The protein resides in the cytoplasm. This is PF03932 family protein CutC from Escherichia coli O17:K52:H18 (strain UMN026 / ExPEC).